The following is a 424-amino-acid chain: Enolase (424 aa).

Glutamine 162 contacts (2R)-2-phosphoglycerate. Residue glutamate 204 is the Proton donor of the active site. Mg(2+) contacts are provided by aspartate 241, glutamate 284, and aspartate 311. 4 residues coordinate (2R)-2-phosphoglycerate: lysine 336, arginine 365, serine 366, and lysine 387. The Proton acceptor role is filled by lysine 336.

Belongs to the enolase family. Mg(2+) is required as a cofactor.

It localises to the cytoplasm. Its subcellular location is the secreted. The protein localises to the cell surface. The enzyme catalyses (2R)-2-phosphoglycerate = phosphoenolpyruvate + H2O. Its pathway is carbohydrate degradation; glycolysis; pyruvate from D-glyceraldehyde 3-phosphate: step 4/5. Catalyzes the reversible conversion of 2-phosphoglycerate (2-PG) into phosphoenolpyruvate (PEP). It is essential for the degradation of carbohydrates via glycolysis. The protein is Enolase of Sinorhizobium fredii (strain NBRC 101917 / NGR234).